The sequence spans 505 residues: Probable alpha-L-arabinofuranosidase C (505 aa).

N-linked (GlcNAc...) asparagine glycans are attached at residues Asn152, Asn181, and Asn269.

It belongs to the glycosyl hydrolase 51 family.

The protein localises to the secreted. The catalysed reaction is Hydrolysis of terminal non-reducing alpha-L-arabinofuranoside residues in alpha-L-arabinosides.. It functions in the pathway glycan metabolism; L-arabinan degradation. In terms of biological role, alpha-L-arabinofuranosidase involved in the degradation of arabinoxylan, a major component of plant hemicellulose. Acts only on small linear 1,5-alpha-linked L-arabinofuranosyl oligosaccharides. In Aspergillus niger (strain ATCC MYA-4892 / CBS 513.88 / FGSC A1513), this protein is Probable alpha-L-arabinofuranosidase C (abfC).